The following is a 268-amino-acid chain: Nickel import ATP-binding protein NikE (268 aa).

Positions 4 to 252 constitute an ABC transporter domain; sequence LNISGLSHHY…SSDAGRVLQN (249 aa). Residue 45 to 52 participates in ATP binding; it reads GRSGCGKS.

This sequence belongs to the ABC transporter superfamily. Nickel importer (TC 3.A.1.5.3) family. The complex is composed of two ATP-binding proteins (NikD and NikE), two transmembrane proteins (NikB and NikC) and a solute-binding protein (NikA).

It localises to the cell inner membrane. It carries out the reaction Ni(2+)(out) + ATP + H2O = Ni(2+)(in) + ADP + phosphate + H(+). In terms of biological role, part of the ABC transporter complex NikABCDE involved in nickel import. Responsible for energy coupling to the transport system. This chain is Nickel import ATP-binding protein NikE, found in Escherichia coli (strain K12).